Consider the following 206-residue polypeptide: Octanoyltransferase (206 aa).

One can recognise a BPL/LPL catalytic domain in the interval 30 to 206 (PETNDEIWLV…EFVTLLNNSI (177 aa)). Residues 69–76 (RGGQVTYH), 137–139 (SLG), and 150–152 (GIA) contribute to the substrate site. Cys168 (acyl-thioester intermediate) is an active-site residue.

Belongs to the LipB family.

It localises to the cytoplasm. The catalysed reaction is octanoyl-[ACP] + L-lysyl-[protein] = N(6)-octanoyl-L-lysyl-[protein] + holo-[ACP] + H(+). The protein operates within protein modification; protein lipoylation via endogenous pathway; protein N(6)-(lipoyl)lysine from octanoyl-[acyl-carrier-protein]: step 1/2. Functionally, catalyzes the transfer of endogenously produced octanoic acid from octanoyl-acyl-carrier-protein onto the lipoyl domains of lipoate-dependent enzymes. Lipoyl-ACP can also act as a substrate although octanoyl-ACP is likely to be the physiological substrate. The protein is Octanoyltransferase of Francisella tularensis subsp. tularensis (strain FSC 198).